Reading from the N-terminus, the 348-residue chain is Phenylalanine--tRNA ligase alpha subunit (348 aa).

Glu-259 is a binding site for Mg(2+).

It belongs to the class-II aminoacyl-tRNA synthetase family. Phe-tRNA synthetase alpha subunit type 1 subfamily. Tetramer of two alpha and two beta subunits. The cofactor is Mg(2+).

The protein resides in the cytoplasm. The catalysed reaction is tRNA(Phe) + L-phenylalanine + ATP = L-phenylalanyl-tRNA(Phe) + AMP + diphosphate + H(+). This chain is Phenylalanine--tRNA ligase alpha subunit, found in Latilactobacillus sakei subsp. sakei (strain 23K) (Lactobacillus sakei subsp. sakei).